The following is a 313-amino-acid chain: HPr kinase/phosphorylase (313 aa).

Catalysis depends on residues His136 and Lys157. 151–158 (GDSGIGKS) provides a ligand contact to ATP. Ser158 lines the Mg(2+) pocket. Residue Asp175 is the Proton acceptor; for phosphorylation activity. Proton donor; for dephosphorylation activity of the active site. The interval 199 to 208 (LEIRGLGIIN) is important for the catalytic mechanism of both phosphorylation and dephosphorylation. Glu200 serves as a coordination point for Mg(2+). Residue Arg241 is part of the active site. Residues 262-267 (PVRPGR) are important for the catalytic mechanism of dephosphorylation.

It belongs to the HPrK/P family. Homohexamer. Requires Mg(2+) as cofactor.

The catalysed reaction is [HPr protein]-L-serine + ATP = [HPr protein]-O-phospho-L-serine + ADP + H(+). The enzyme catalyses [HPr protein]-O-phospho-L-serine + phosphate + H(+) = [HPr protein]-L-serine + diphosphate. Catalyzes the ATP- as well as the pyrophosphate-dependent phosphorylation of a specific serine residue in HPr, a phosphocarrier protein of the phosphoenolpyruvate-dependent sugar phosphotransferase system (PTS). HprK/P also catalyzes the pyrophosphate-producing, inorganic phosphate-dependent dephosphorylation (phosphorolysis) of seryl-phosphorylated HPr (P-Ser-HPr). The two antagonistic activities of HprK/P are regulated by several intracellular metabolites, which change their concentration in response to the absence or presence of rapidly metabolisable carbon sources (glucose, fructose, etc.) in the growth medium. Therefore, by controlling the phosphorylation state of HPr, HPrK/P is a sensor enzyme that plays a major role in the regulation of carbon metabolism and sugar transport: it mediates carbon catabolite repression (CCR), and regulates PTS-catalyzed carbohydrate uptake and inducer exclusion. This chain is HPr kinase/phosphorylase, found in Staphylococcus saprophyticus subsp. saprophyticus (strain ATCC 15305 / DSM 20229 / NCIMB 8711 / NCTC 7292 / S-41).